Reading from the N-terminus, the 306-residue chain is Fe-S cluster assembly protein dre2 (306 aa).

The tract at residues 21–150 (NVTQKRSLLL…EKPQYQEAAV (130 aa)) is N-terminal SAM-like domain. A linker region spans residues 151-196 (PLRFGANKRKNKISPEPVKIESVGFVDNYDDDELINEDDLLDEEDL). Residues cysteine 206, cysteine 218, cysteine 221, and cysteine 223 each coordinate [2Fe-2S] cluster. The fe-S binding site A stretch occupies residues 206–223 (CQPETAKKRRRACKDCTC). [4Fe-4S] cluster-binding residues include cysteine 269, cysteine 272, cysteine 280, and cysteine 283. 2 consecutive short sequence motifs (cx2C motif) follow at residues 269-272 (CNSC) and 280-283 (CASC). The interval 269-283 (CNSCSLGDAFRCASC) is fe-S binding site B.

The protein belongs to the anamorsin family. Monomer. Interacts with tah18. Interacts with mia40. [2Fe-2S] cluster is required as a cofactor. Requires [4Fe-4S] cluster as cofactor.

It localises to the cytoplasm. It is found in the mitochondrion intermembrane space. Its function is as follows. Component of the cytosolic iron-sulfur (Fe-S) protein assembly (CIA) machinery required for the maturation of extramitochondrial Fe-S proteins. Part of an electron transfer chain functioning in an early step of cytosolic Fe-S biogenesis, facilitating the de novo assembly of a [4Fe-4S] cluster on the scaffold complex cfd1-nbp35. Electrons are transferred to dre2 from NADPH via the FAD- and FMN-containing protein tah18. Tah18-dre2 are also required for the assembly of the diferric tyrosyl radical cofactor of ribonucleotide reductase (RNR), probably by providing electrons for reduction during radical cofactor maturation in the catalytic small subunit rnr2. The chain is Fe-S cluster assembly protein dre2 from Talaromyces stipitatus (strain ATCC 10500 / CBS 375.48 / QM 6759 / NRRL 1006) (Penicillium stipitatum).